The following is an 84-amino-acid chain: Dolichol phosphate-mannose biosynthesis regulatory protein (84 aa).

A run of 2 helical transmembrane segments spans residues 11–31 (FGLV…VILL) and 49–69 (YAVL…GLFI).

It belongs to the DPM2 family. Component of the dolichol-phosphate mannose (DPM) synthase complex composed of DPM1, DPM2 and DPM3; in the complex interacts directly with DPM3. Component of the glycosylphosphatidylinositol-N-acetylglucosaminyltransferase (GPI-GnT) complex composed at least by PIGA, PIGC, PIGH, PIGP, PIGQ, PIGY and DPM2. Interacts with PIGA, PIGC and PIGQ.

The protein localises to the endoplasmic reticulum membrane. It participates in protein modification; protein glycosylation. Functionally, regulates the biosynthesis of dolichol phosphate-mannose. Regulatory subunit of the dolichol-phosphate mannose (DPM) synthase complex; essential for the ER localization and stable expression of DPM1. Part of the glycosylphosphatidylinositol-N-acetylglucosaminyltransferase (GPI-GnT) complex that catalyzes the transfer of N-acetylglucosamine from UDP-N-acetylglucosamine to phosphatidylinositol and participates in the first step of GPI biosynthesis. May act by regulating the GPI-GNT complex. This Rattus norvegicus (Rat) protein is Dolichol phosphate-mannose biosynthesis regulatory protein.